The chain runs to 277 residues: Large ribosomal subunit protein uL2 (277 aa).

Composition is skewed to basic residues over residues Arg210–Gln219 and Thr259–Lys277. Positions Arg210–Lys277 are disordered.

It belongs to the universal ribosomal protein uL2 family. In terms of assembly, part of the 50S ribosomal subunit. Forms a bridge to the 30S subunit in the 70S ribosome.

Its function is as follows. One of the primary rRNA binding proteins. Required for association of the 30S and 50S subunits to form the 70S ribosome, for tRNA binding and peptide bond formation. It has been suggested to have peptidyltransferase activity; this is somewhat controversial. Makes several contacts with the 16S rRNA in the 70S ribosome. The sequence is that of Large ribosomal subunit protein uL2 from Ligilactobacillus salivarius (strain UCC118) (Lactobacillus salivarius).